We begin with the raw amino-acid sequence, 508 residues long: Photosystem II CP47 reaction center protein (508 aa).

The next 6 membrane-spanning stretches (helical) occupy residues 21–36 (SVHL…WAGS), 101–115 (IVLS…IWHW), 140–156 (GIHL…FGAF), 203–218 (IAAG…FHLS), 237–252 (VLSS…AFVV), and 457–472 (TFAL…HGAR).

Belongs to the PsbB/PsbC family. PsbB subfamily. PSII is composed of 1 copy each of membrane proteins PsbA, PsbB, PsbC, PsbD, PsbE, PsbF, PsbH, PsbI, PsbJ, PsbK, PsbL, PsbM, PsbT, PsbX, PsbY, PsbZ, Psb30/Ycf12, at least 3 peripheral proteins of the oxygen-evolving complex and a large number of cofactors. It forms dimeric complexes. Requires Binds multiple chlorophylls. PSII binds additional chlorophylls, carotenoids and specific lipids. as cofactor.

It is found in the plastid. The protein resides in the chloroplast thylakoid membrane. Its function is as follows. One of the components of the core complex of photosystem II (PSII). It binds chlorophyll and helps catalyze the primary light-induced photochemical processes of PSII. PSII is a light-driven water:plastoquinone oxidoreductase, using light energy to abstract electrons from H(2)O, generating O(2) and a proton gradient subsequently used for ATP formation. The sequence is that of Photosystem II CP47 reaction center protein from Angiopteris evecta (Mule's foot fern).